A 424-amino-acid polypeptide reads, in one-letter code: MIIMDLGTTKYIIYAELIADGYVEKHDVIGAIFGQTEGLLGDELDLRELQKTGRVGRIDVELTNINGKSIAKITVPSSLDRIETSILAATLETIDRVGPCVATVKVIDIEDIRKKKREYIVERAKEILKQLMSNIDVNTIIEEVKESVRMGEIIEYGPERLPAGPAVDSSDDIIVVEGRADVLNLLRCGIKNVIAVEGTSVPKTIIELSKKKIVTVFTDGDRGGELILKELLQVCDVDFVARAPPGKEVEELSKKEIMKCLRSKIPAEHILAQILKDKQKIDEKVCKDEIRNMGIQTIPEIKPEISITSNDDVEVSSVECNPSNNEELPPKYNKYRKFYEKLIELEDSKVLIINGDKEEIVSIEELINNTDNYKSIDAIIINGTVTQKLIDILYEKTNLIFCKDAKIIKKPVNLTLITFGDLNA.

The Toprim domain occupies 171–245 (DDIIVVEGRA…DVDFVARAPP (75 aa)). Mg(2+)-binding residues include Glu-177, Asp-219, and Asp-221.

The protein belongs to the archaeal DnaG primase family. In terms of assembly, forms a ternary complex with MCM helicase and DNA. It depends on Mg(2+) as a cofactor.

It carries out the reaction ssDNA + n NTP = ssDNA/pppN(pN)n-1 hybrid + (n-1) diphosphate.. RNA polymerase that catalyzes the synthesis of short RNA molecules used as primers for DNA polymerase during DNA replication. This is DNA primase DnaG from Methanocaldococcus jannaschii (strain ATCC 43067 / DSM 2661 / JAL-1 / JCM 10045 / NBRC 100440) (Methanococcus jannaschii).